The sequence spans 176 residues: NADH-quinone oxidoreductase subunit I (176 aa).

4Fe-4S ferredoxin-type domains follow at residues 47-77 (LTRDPDGEERCVACHLCSAACPVDCISMQAA) and 87-116 (AWFRINFSRCIFCGLCTEACPTLALQMTSE). The [4Fe-4S] cluster site is built by Cys57, Cys60, Cys63, Cys67, Cys96, Cys99, Cys102, and Cys106.

It belongs to the complex I 23 kDa subunit family. As to quaternary structure, NDH-1 is composed of 14 different subunits. Subunits NuoA, H, J, K, L, M, N constitute the membrane sector of the complex. [4Fe-4S] cluster serves as cofactor.

It is found in the cell inner membrane. It carries out the reaction a quinone + NADH + 5 H(+)(in) = a quinol + NAD(+) + 4 H(+)(out). NDH-1 shuttles electrons from NADH, via FMN and iron-sulfur (Fe-S) centers, to quinones in the respiratory chain. The immediate electron acceptor for the enzyme in this species is believed to be ubiquinone. Couples the redox reaction to proton translocation (for every two electrons transferred, four hydrogen ions are translocated across the cytoplasmic membrane), and thus conserves the redox energy in a proton gradient. The protein is NADH-quinone oxidoreductase subunit I of Syntrophotalea carbinolica (strain DSM 2380 / NBRC 103641 / GraBd1) (Pelobacter carbinolicus).